The sequence spans 1357 residues: Vascular endothelial growth factor receptor 3 (1357 aa).

A signal peptide spans 1-24; that stretch reads MKRDFTFFCRIWIGIPFFSGLVNG. Ig-like C2-type domains lie at 25–121, 138–244, 255–343, 352–442, 453–583, 583–690, and 699–785; these read FSMS…YYRC, IFVF…VQVI, PEDS…RELT, PFIS…LNFT, EKEA…TTIP, PEGF…HRKY, and PRYR…ATVS. Over 25-796 the chain is Extracellular; sequence FSMSPPTLDN…IGSDDKTNVE (772 aa). N-linked (GlcNAc...) asparagine glycans are attached at residues N44, N48, N114, N216, and N271. 2 cysteine pairs are disulfide-bonded: C51-C121 and C173-C225. A disulfide bridge connects residues C272 and C331. N-linked (GlcNAc...) asparagine glycosylation is found at N360, N400, and N440. 3 disulfide bridges follow: C473–C562, C493–C514, and C606–C674. N553, N610, N660, N707, N711, and N751 each carry an N-linked (GlcNAc...) asparagine glycan. Residues C720 and C772 are joined by a disulfide bond. A helical transmembrane segment spans residues 797–817; that stretch reads IVILIGTGVIAIFFWVLLLVI. Topologically, residues 818 to 1357 are cytoplasmic; sequence FCNVKRVNPA…DYFSSSDQAV (540 aa). In terms of domain architecture, Protein kinase spans 866–1181; sequence LRLGKVLGHG…ALVEILGDLL (316 aa). ATP-binding positions include 872–880 and K900; that span reads LGHGAFGKV. The segment at 978–1007 is disordered; sequence QSQVRRMIEAGQASQSEHQPSTSSTNPPRV. A compositionally biased stretch (polar residues) spans 989-1005; sequence QASQSEHQPSTSSTNPP. The active-site Proton acceptor is the D1045. Y1071 and Y1076 each carry phosphotyrosine; by autocatalysis. The disordered stretch occupies residues 1192–1212; that stretch reads NVSQSSEDDGFSQASSRPPSQ. Y1226, Y1227, Y1334, and Y1338 each carry phosphotyrosine; by autocatalysis.

The protein belongs to the protein kinase superfamily. Tyr protein kinase family. CSF-1/PDGF receptor subfamily. In terms of assembly, interacts with vegfc and vegfd. Monomer in the absence of bound vegfc or vegfd. Homodimer in the presence of bound vegfc or vegfd. Post-translationally, autophosphorylated on tyrosine residues upon ligand binding. Autophosphorylation occurs in trans, i.e. one subunit of the dimeric receptor phosphorylates tyrosine residues on the other subunit.

The protein localises to the cell membrane. It is found in the cytoplasm. The protein resides in the nucleus. The enzyme catalyses L-tyrosyl-[protein] + ATP = O-phospho-L-tyrosyl-[protein] + ADP + H(+). Its activity is regulated as follows. Present in an inactive conformation in the absence of bound ligand. Binding of vegfc or vegfd leads to dimerization and activation by autophosphorylation on tyrosine residues. Functionally, tyrosine-protein kinase that acts as a cell-surface receptor for vegf or vegfc. Combinations of multiple VEGF receptors are required for development of different blood vessel types in the embryo. Involved in angiogenesis, specifically in VEGF-induced sprouting of new blood vessels, but not required for proper vasculogenesis or hematopoiesis. This chain is Vascular endothelial growth factor receptor 3 (flt4), found in Danio rerio (Zebrafish).